Consider the following 228-residue polypeptide: MKWKDWVHVTKLDPDKQLGPGDIDAIAASGTDALMLSGTLNVTKENLLALQKMIAQYDLPLVMEPAGPEAVLMEGIEYVFVPSVLNTTDVQWIVGKHRSWVQQQDGKIPWDMVVPEAYIVLNPASSVGRVTKAVCDLKPAEVAAYTEVADRYFHFPIVYIEYSGTYGAPAVVKAAAEAIDHAILYYGGGINSAEKAAEMGKYADTIVVGNAVYDQGASVLKATVDAVQ.

Lysine 11 is a binding site for sn-glycerol 1-phosphate. Residues aspartate 13 and threonine 39 each coordinate Mg(2+). Residues 159-164 (YIEYSG), glycine 189, and 209-210 (GN) each bind sn-glycerol 1-phosphate.

This sequence belongs to the GGGP/HepGP synthase family. Group I subfamily. Requires Mg(2+) as cofactor.

Its subcellular location is the cytoplasm. The catalysed reaction is sn-glycerol 1-phosphate + (2E,6E,10E)-geranylgeranyl diphosphate = sn-3-O-(geranylgeranyl)glycerol 1-phosphate + diphosphate. It participates in membrane lipid metabolism; glycerophospholipid metabolism. Prenyltransferase that catalyzes the transfer of the geranylgeranyl moiety of geranylgeranyl diphosphate (GGPP) to the C3 hydroxyl of sn-glycerol-1-phosphate (G1P). This reaction is the first ether-bond-formation step in the biosynthesis of archaeal membrane lipids. The chain is Geranylgeranylglyceryl phosphate synthase from Methanoregula boonei (strain DSM 21154 / JCM 14090 / 6A8).